The sequence spans 464 residues: Kynureninase (464 aa).

N-acetylmethionine is present on Met1. Residues Leu137, Thr138, 165-168 (FPSD), Ser221, Asp250, His253, and Tyr275 each bind pyridoxal 5'-phosphate. Lys276 is modified (N6-(pyridoxal phosphate)lysine). Residues Trp305 and Asn333 each coordinate pyridoxal 5'-phosphate.

This sequence belongs to the kynureninase family. Homodimer. The cofactor is pyridoxal 5'-phosphate.

Its subcellular location is the cytoplasm. The protein resides in the cytosol. The catalysed reaction is L-kynurenine + H2O = anthranilate + L-alanine + H(+). It catalyses the reaction 3-hydroxy-L-kynurenine + H2O = 3-hydroxyanthranilate + L-alanine + H(+). It functions in the pathway amino-acid degradation; L-kynurenine degradation; L-alanine and anthranilate from L-kynurenine: step 1/1. It participates in cofactor biosynthesis; NAD(+) biosynthesis; quinolinate from L-kynurenine: step 2/3. In terms of biological role, catalyzes the cleavage of L-kynurenine (L-Kyn) and L-3-hydroxykynurenine (L-3OHKyn) into anthranilic acid (AA) and 3-hydroxyanthranilic acid (3-OHAA), respectively. Has a preference for the L-3-hydroxy form. Also has cysteine-conjugate-beta-lyase activity. The polypeptide is Kynureninase (Kynu) (Mus musculus (Mouse)).